Reading from the N-terminus, the 221-residue chain is CDC5 pindle pole body anchor protein 1 (221 aa).

The disordered stretch occupies residues 142–221; it reads KNIERDNLKP…PTEDSVPHAE (80 aa). 3 positions are modified to phosphoserine: Ser158, Ser170, and Ser175. A CDC5-binding motif is present at residues 165–170; that stretch reads PLVTSS. The span at 166–188 shows a compositional bias: polar residues; it reads LVTSSPIHMSPLQSRQRPVSSLQ. The CLB3-docking motif lies at 189-195; that stretch reads PPKGPNF. A CDC14-binding motif is present at residues 200 to 202; it reads PKL.

As to quaternary structure, interacts with CDC5 and CDC14. Post-translationally, phosphorylated by CLB3-CDK1 in metaphase which is required for correct localization at the nuclear envelop and the spindle pole body, and dephosphorylated by CDC14 in early anaphase.

It is found in the nucleus membrane. The protein localises to the cytoplasm. Its subcellular location is the cytoskeleton. It localises to the microtubule organizing center. The protein resides in the spindle pole body. Functionally, specialized component of the nuclear membrane that may be involved in the connection of the spindle pole body (SPB) to the nuclear envelope. Recruits CDC5 to spindle pole bodies in metaphase. The polypeptide is CDC5 pindle pole body anchor protein 1 (Saccharomyces cerevisiae (strain ATCC 204508 / S288c) (Baker's yeast)).